We begin with the raw amino-acid sequence, 321 residues long: NADH-ubiquinone oxidoreductase chain 1 (321 aa).

Helical transmembrane passes span 5–25, 74–94, 104–124, 151–171, 175–195, 227–247, 256–276, and 296–316; these read LVTL…AFLT, LLIL…APIP, LGLL…LWAG, GIIL…LLTI, YTWL…STLA, FFLA…ILFI, ELFL…FLWI, and FLPM…SISG.

It belongs to the complex I subunit 1 family.

The protein resides in the mitochondrion inner membrane. The catalysed reaction is a ubiquinone + NADH + 5 H(+)(in) = a ubiquinol + NAD(+) + 4 H(+)(out). Functionally, core subunit of the mitochondrial membrane respiratory chain NADH dehydrogenase (Complex I) that is believed to belong to the minimal assembly required for catalysis. Complex I functions in the transfer of electrons from NADH to the respiratory chain. The immediate electron acceptor for the enzyme is believed to be ubiquinone. This chain is NADH-ubiquinone oxidoreductase chain 1 (MT-ND1), found in Varanus baritji (Black-spotted ridge-tailed monitor).